A 186-amino-acid chain; its full sequence is Probable chorismate pyruvate-lyase (186 aa).

The substrate site is built by Arg77, Leu115, and Glu174.

This sequence belongs to the UbiC family.

It is found in the cytoplasm. The catalysed reaction is chorismate = 4-hydroxybenzoate + pyruvate. It participates in cofactor biosynthesis; ubiquinone biosynthesis. In terms of biological role, removes the pyruvyl group from chorismate, with concomitant aromatization of the ring, to provide 4-hydroxybenzoate (4HB) for the ubiquinone pathway. The protein is Probable chorismate pyruvate-lyase of Shewanella sp. (strain W3-18-1).